The sequence spans 146 residues: Hemoglobin subunit beta (146 aa).

At Val1 the chain carries N-acetylvaline. A Globin domain is found at 2 to 146; sequence HLTDGEKNAL…VANALAHKYH (145 aa). Position 44 is a phosphoserine (Ser44). Lys59 carries the post-translational modification N6-acetyllysine. His63 is a heme b binding site. The residue at position 82 (Lys82) is an N6-acetyllysine. His92 lines the heme b pocket. Position 93 is an S-nitrosocysteine (Cys93). Lys144 is modified (N6-acetyllysine).

This sequence belongs to the globin family. As to quaternary structure, heterotetramer of two alpha chains and two beta chains. As to expression, red blood cells.

Its function is as follows. Involved in oxygen transport from the lung to the various peripheral tissues. The chain is Hemoglobin subunit beta from Otospermophilus beecheyi (California ground squirrel).